Consider the following 100-residue polypeptide: Vesicle-associated membrane protein 8 (100 aa).

At Met-1–Lys-74 the chain is on the cytoplasmic side. Residues Ser-4 and Ser-17 each carry the phosphoserine modification. The 61-residue stretch at Arg-11–Lys-71 folds into the v-SNARE coiled-coil homology domain. Phosphothreonine is present on residues Thr-27, Thr-47, and Thr-53. At Ser-54 the chain carries Phosphoserine. A helical; Anchor for type IV membrane protein transmembrane segment spans residues Met-75–Thr-95. Topologically, residues Gly-96–Thr-100 are vesicular.

It belongs to the synaptobrevin family. As to quaternary structure, forms a SNARE complex composed of VAMP8, SNAP29 and STX17 involved in fusion of autophagosome with lysosome. Found in a number of SNARE complexes with NAPA, SNAP23, SNAP25, STX1A, STX4, STX7, STX8 and VTI1B. Interacts with PICALM. SNARE complex formation and binding by PICALM are mutually exclusive processes for VAMP8. Interacts with SBF2/MTMR13. Interacts with RAB21 (in GTP-bound form) in response to starvation; the interaction probably regulates VAMP8 endolysosomal trafficking. Interacts with STX17; this interaction is increased in the absence of TMEM39A. Interacts with TRIM6. Expressed (at protein level) at a high level in kidney, lung and spleen; at a lower level in testis, liver, brain and heart. Expressed in kidney and retinal pigment epithelium derived cell line.

It localises to the lysosome membrane. The protein localises to the late endosome membrane. Its subcellular location is the early endosome membrane. The protein resides in the midbody. It is found in the cell membrane. It localises to the zymogen granule membrane. Functionally, SNAREs, soluble N-ethylmaleimide-sensitive factor-attachment protein receptors, are essential proteins for fusion of cellular membranes. SNAREs localized on opposing membranes assemble to form a trans-SNARE complex, an extended, parallel four alpha-helical bundle that drives membrane fusion. VAMP8 is a SNARE involved in autophagy through the direct control of autophagosome membrane fusion with the lysososome membrane via its interaction with the STX17-SNAP29 binary t-SNARE complex. Also required for dense-granule secretion in platelets. Also plays a role in regulated enzyme secretion in pancreatic acinar cells. Involved in the abscission of the midbody during cell division, which leads to completely separate daughter cells. Involved in the homotypic fusion of early and late endosomes. Also participates in the activation of type I interferon antiviral response through a TRIM6-dependent mechanism. In Rattus norvegicus (Rat), this protein is Vesicle-associated membrane protein 8.